A 421-amino-acid polypeptide reads, in one-letter code: L-Ala-D/L-amino acid epimerase (421 aa).

Residues threonine 193 and 218 to 220 (KLK) each bind substrate. Mg(2+)-binding residues include aspartate 247, glutamate 275, and aspartate 304. Residues lysine 328 and 380–382 (DLD) contribute to the substrate site.

It belongs to the mandelate racemase/muconate lactonizing enzyme family. Requires Mg(2+) as cofactor.

In terms of biological role, catalyzes the epimerization of various hydrophobic and polar dipeptides. Has epimerase activity with L-Ala-L-Ala, L-Ala-L-Ser, L-Ala-L-Thr and L-Ala-L-Trp (in vitro). In Populus trichocarpa (Western balsam poplar), this protein is L-Ala-D/L-amino acid epimerase.